Here is a 154-residue protein sequence, read N- to C-terminus: Methylglyoxal synthase (154 aa).

An MGS-like domain is found at 6-154 (SPLPANKAIA…AYMARRAQGN (149 aa)). Substrate is bound by residues H19, K23, 45-48 (TGTT), and 65-66 (SG). Catalysis depends on D71, which acts as the Proton donor/acceptor. Position 98 (H98) interacts with substrate.

This sequence belongs to the methylglyoxal synthase family.

The enzyme catalyses dihydroxyacetone phosphate = methylglyoxal + phosphate. In terms of biological role, catalyzes the formation of methylglyoxal from dihydroxyacetone phosphate. The chain is Methylglyoxal synthase from Cellvibrio japonicus (strain Ueda107) (Pseudomonas fluorescens subsp. cellulosa).